The sequence spans 1153 residues: PPi-type phosphoenolpyruvate carboxykinase 3 (1153 aa).

A coiled-coil region spans residues Arg-1085–Glu-1131.

It belongs to the PPi-type phosphoenolpyruvate carboxykinase family. Monomer and trimer; forms heterotrimers with PEPCK1 and PEPCK2.

It is found in the cytoplasm. Its subcellular location is the cytosol. The enzyme catalyses oxaloacetate + diphosphate = phosphoenolpyruvate + phosphate + CO2. Its function is as follows. Inorganic pyrophosphate (PPi)-dependent phosphoenolpyruvate carboxykinase, which regulates the carbon flow of the central metabolism by fixing CO(2) to phosphoenolpyruvate to produce oxaloacetate. Can also produce pyruvate and diphosphate from phosphoenolpyruvate and phosphate. This is PPi-type phosphoenolpyruvate carboxykinase 3 from Entamoeba histolytica (strain ATCC 30459 / HM-1:IMSS / ABRM).